The sequence spans 163 residues: Neurotrophin-3 (163 aa).

An N-terminal signal peptide occupies residues 1-3 (IQS). Positions 4–119 (TSMDQGILTE…VLNRTSRRKR (116 aa)) are excised as a propeptide. N-linked (GlcNAc...) asparagine glycosylation is present at Asn-112. The tract at residues 114–133 (TSRRKREGKSHRGEYSVCDS) is disordered. The span at 123–133 (SHRGEYSVCDS) shows a compositional bias: basic and acidic residues.

This sequence belongs to the NGF-beta family.

Its subcellular location is the secreted. In terms of biological role, seems to promote the survival of visceral and proprioceptive sensory neurons. This Lichanura trivirgata (Rosy boa) protein is Neurotrophin-3 (NTF3).